The primary structure comprises 246 residues: Proteasome subunit alpha type-6 (246 aa).

The protein belongs to the peptidase T1A family. As to quaternary structure, the 26S proteasome consists of a 20S proteasome core and two 19S regulatory subunits. The 20S proteasome core is composed of 28 subunits that are arranged in four stacked rings, resulting in a barrel-shaped structure. The two end rings are each formed by seven alpha subunits, and the two central rings are each formed by seven beta subunits. The catalytic chamber with the active sites is on the inside of the barrel.

Its subcellular location is the cytoplasm. The protein resides in the nucleus. In terms of biological role, the proteasome is a multicatalytic proteinase complex which is characterized by its ability to cleave peptides with Arg, Phe, Tyr, Leu, and Glu adjacent to the leaving group at neutral or slightly basic pH. The proteasome has an ATP-dependent proteolytic activity. This Caenorhabditis elegans protein is Proteasome subunit alpha type-6 (pas-1).